A 462-amino-acid polypeptide reads, in one-letter code: Argininosuccinate lyase (462 aa).

It belongs to the lyase 1 family. Argininosuccinate lyase subfamily.

It is found in the cytoplasm. The catalysed reaction is 2-(N(omega)-L-arginino)succinate = fumarate + L-arginine. The protein operates within amino-acid biosynthesis; L-arginine biosynthesis; L-arginine from L-ornithine and carbamoyl phosphate: step 3/3. The chain is Argininosuccinate lyase from Streptococcus agalactiae serotype V (strain ATCC BAA-611 / 2603 V/R).